Reading from the N-terminus, the 98-residue chain is PqqA binding protein (98 aa).

Belongs to the PqqD family. As to quaternary structure, monomer. Interacts with PqqE.

The protein operates within cofactor biosynthesis; pyrroloquinoline quinone biosynthesis. Functionally, functions as a PqqA binding protein and presents PqqA to PqqE, in the pyrroloquinoline quinone (PQQ) biosynthetic pathway. This is PqqA binding protein from Pseudomonas syringae pv. tomato (strain ATCC BAA-871 / DC3000).